A 591-amino-acid polypeptide reads, in one-letter code: Aspartate--tRNA ligase (591 aa).

Glutamate 175 contributes to the L-aspartate binding site. Residues glutamine 199–lysine 202 form an aspartate region. Arginine 221 lines the L-aspartate pocket. ATP contacts are provided by residues arginine 221–glutamate 223 and glutamine 230. Histidine 449 serves as a coordination point for L-aspartate. Residue glutamate 483 coordinates ATP. Arginine 490 is an L-aspartate binding site. Glycine 535–arginine 538 serves as a coordination point for ATP.

Belongs to the class-II aminoacyl-tRNA synthetase family. Type 1 subfamily. As to quaternary structure, homodimer.

Its subcellular location is the cytoplasm. It carries out the reaction tRNA(Asp) + L-aspartate + ATP = L-aspartyl-tRNA(Asp) + AMP + diphosphate. In terms of biological role, catalyzes the attachment of L-aspartate to tRNA(Asp) in a two-step reaction: L-aspartate is first activated by ATP to form Asp-AMP and then transferred to the acceptor end of tRNA(Asp). The sequence is that of Aspartate--tRNA ligase from Oceanobacillus iheyensis (strain DSM 14371 / CIP 107618 / JCM 11309 / KCTC 3954 / HTE831).